Consider the following 935-residue polypeptide: Inter-alpha-trypsin inhibitor heavy chain H2 (935 aa).

A signal peptide spans 1-18 (MKGLTCFLLCFLLSEAQG). The propeptide occupies 19 to 53 (FEIPTNGLSEFAEYGDLAELALGKFHVVPGNRRSQ). Residues 45 to 174 (VVPGNRRSQE…KVQFELHYQE (130 aa)) form the VIT domain. N-linked (GlcNAc...) asparagine glycosylation occurs at Asn107. The residue at position 271 (Glu271) is a 4-carboxyglutamate. The 161-residue stretch at 297–457 (PKNILFVIDV…YDFLKRLSND (161 aa)) folds into the VWFA domain. Asn434 is a glycosylation site (N-linked (GlcNAc...) asparagine). Ser455 is modified (phosphoserine). Asp691 carries the post-translational modification Aspartate 1-(chondroitin 4-sulfate)-ester. The propeptide occupies 692-935 (PHFIIYLPRS…PLLYSFLKRP (244 aa)). The residue at position 875 (Ser875) is a Phosphoserine.

It belongs to the ITIH family. I-alpha-I plasma protease inhibitors are assembled from one or two heavy chains (HC) and one light chain, bikunin. Inter-alpha-inhibitor (I-alpha-I) is composed of ITIH1/HC1, ITIH2/HC2 and bikunin. Post-translationally, heavy chains are linked to bikunin via chondroitin 4-sulfate esterified to the alpha-carboxyl of the C-terminal aspartate after propeptide cleavage. Phosphorylated by FAM20C in the extracellular medium.

It is found in the secreted. In terms of biological role, may act as a carrier of hyaluronan in serum or as a binding protein between hyaluronan and other matrix protein, including those on cell surfaces in tissues to regulate the localization, synthesis and degradation of hyaluronan which are essential to cells undergoing biological processes. The sequence is that of Inter-alpha-trypsin inhibitor heavy chain H2 (ITIH2) from Sus scrofa (Pig).